We begin with the raw amino-acid sequence, 158 residues long: Ribosomal RNA large subunit methyltransferase H (158 aa).

S-adenosyl-L-methionine-binding positions include leucine 73, glycine 107, and 126 to 131; that span reads FGEITL.

Belongs to the RNA methyltransferase RlmH family. Homodimer.

It localises to the cytoplasm. It catalyses the reaction pseudouridine(1915) in 23S rRNA + S-adenosyl-L-methionine = N(3)-methylpseudouridine(1915) in 23S rRNA + S-adenosyl-L-homocysteine + H(+). In terms of biological role, specifically methylates the pseudouridine at position 1915 (m3Psi1915) in 23S rRNA. The sequence is that of Ribosomal RNA large subunit methyltransferase H from Rubrobacter xylanophilus (strain DSM 9941 / JCM 11954 / NBRC 16129 / PRD-1).